The primary structure comprises 219 residues: Thiamine-phosphate synthase (219 aa).

4-amino-2-methyl-5-(diphosphooxymethyl)pyrimidine contacts are provided by residues 44–48 (QFREK) and N79. Mg(2+) is bound by residues D80 and D99. 4-amino-2-methyl-5-(diphosphooxymethyl)pyrimidine is bound at residue S117. Residue 143–145 (TST) participates in 2-[(2R,5Z)-2-carboxy-4-methylthiazol-5(2H)-ylidene]ethyl phosphate binding. K146 contributes to the 4-amino-2-methyl-5-(diphosphooxymethyl)pyrimidine binding site. 2-[(2R,5Z)-2-carboxy-4-methylthiazol-5(2H)-ylidene]ethyl phosphate-binding positions include G175 and 195–196 (IS).

It belongs to the thiamine-phosphate synthase family. The cofactor is Mg(2+).

The enzyme catalyses 2-[(2R,5Z)-2-carboxy-4-methylthiazol-5(2H)-ylidene]ethyl phosphate + 4-amino-2-methyl-5-(diphosphooxymethyl)pyrimidine + 2 H(+) = thiamine phosphate + CO2 + diphosphate. It carries out the reaction 2-(2-carboxy-4-methylthiazol-5-yl)ethyl phosphate + 4-amino-2-methyl-5-(diphosphooxymethyl)pyrimidine + 2 H(+) = thiamine phosphate + CO2 + diphosphate. It catalyses the reaction 4-methyl-5-(2-phosphooxyethyl)-thiazole + 4-amino-2-methyl-5-(diphosphooxymethyl)pyrimidine + H(+) = thiamine phosphate + diphosphate. Its pathway is cofactor biosynthesis; thiamine diphosphate biosynthesis; thiamine phosphate from 4-amino-2-methyl-5-diphosphomethylpyrimidine and 4-methyl-5-(2-phosphoethyl)-thiazole: step 1/1. Condenses 4-methyl-5-(beta-hydroxyethyl)thiazole monophosphate (THZ-P) and 2-methyl-4-amino-5-hydroxymethyl pyrimidine pyrophosphate (HMP-PP) to form thiamine monophosphate (TMP). The protein is Thiamine-phosphate synthase of Bacillus cereus (strain AH187).